Here is a 127-residue protein sequence, read N- to C-terminus: Aspartate 1-decarboxylase (127 aa).

Ser-25 (schiff-base intermediate with substrate; via pyruvic acid) is an active-site residue. Ser-25 is modified (pyruvic acid (Ser)). Thr-57 provides a ligand contact to substrate. Tyr-58 (proton donor) is an active-site residue. 73–75 (GAA) serves as a coordination point for substrate.

This sequence belongs to the PanD family. In terms of assembly, heterooctamer of four alpha and four beta subunits. It depends on pyruvate as a cofactor. Is synthesized initially as an inactive proenzyme, which is activated by self-cleavage at a specific serine bond to produce a beta-subunit with a hydroxyl group at its C-terminus and an alpha-subunit with a pyruvoyl group at its N-terminus.

It is found in the cytoplasm. The catalysed reaction is L-aspartate + H(+) = beta-alanine + CO2. The protein operates within cofactor biosynthesis; (R)-pantothenate biosynthesis; beta-alanine from L-aspartate: step 1/1. Functionally, catalyzes the pyruvoyl-dependent decarboxylation of aspartate to produce beta-alanine. The chain is Aspartate 1-decarboxylase from Halalkalibacterium halodurans (strain ATCC BAA-125 / DSM 18197 / FERM 7344 / JCM 9153 / C-125) (Bacillus halodurans).